The sequence spans 248 residues: uncharacterized protein (248 aa).

This is an uncharacterized protein from Escherichia coli (Bacteriophage T4).